The chain runs to 129 residues: NADH-quinone oxidoreductase subunit K 2 (129 aa).

A run of 3 helical transmembrane segments spans residues 3 to 23 (LAYP…GVLA), 28 to 48 (ILVL…LVAF), and 68 to 88 (LFTI…VLAV). A disordered region spans residues 98-129 (DKLRDTAEGPEPDGPGTDGSAPTAAEKAEATA). Residues 111–122 (GPGTDGSAPTAA) show a composition bias toward low complexity.

This sequence belongs to the complex I subunit 4L family. In terms of assembly, NDH-1 is composed of 14 different subunits. Subunits NuoA, H, J, K, L, M, N constitute the membrane sector of the complex.

It localises to the cell membrane. It catalyses the reaction a quinone + NADH + 5 H(+)(in) = a quinol + NAD(+) + 4 H(+)(out). Functionally, NDH-1 shuttles electrons from NADH, via FMN and iron-sulfur (Fe-S) centers, to quinones in the respiratory chain. The immediate electron acceptor for the enzyme in this species is believed to be a menaquinone. Couples the redox reaction to proton translocation (for every two electrons transferred, four hydrogen ions are translocated across the cytoplasmic membrane), and thus conserves the redox energy in a proton gradient. This is NADH-quinone oxidoreductase subunit K 2 from Streptomyces avermitilis (strain ATCC 31267 / DSM 46492 / JCM 5070 / NBRC 14893 / NCIMB 12804 / NRRL 8165 / MA-4680).